The following is a 551-amino-acid chain: Structure-specific endonuclease subunit MUS81 (551 aa).

2 disordered regions span residues 84–131 (HLAS…VGYW) and 229–259 (FRPE…QQRP). A compositionally biased stretch (low complexity) spans 92–107 (APSSPSGKKGASKGPP). S95 bears the Phosphoserine mark. The span at 110–131 (VQDSSMPVPTQPQAGSTSVGYW) shows a compositional bias: polar residues. The segment at 124–244 (GSTSVGYWPA…HGEDSAVPEA (121 aa)) is interaction with BLM. Positions 131–230 (WPAQNSGARE…GLSTRHAGFR (100 aa)) are winged helix domain (WHD); critical for endonuclease activity. Over residues 229-238 (FRPEEHHGED) the composition is skewed to basic and acidic residues. The ERCC4 domain occupies 270–372 (LLCVDIGETR…HRVYLVEEHG (103 aa)). Residues D274, E277, and D307 contribute to the active site. The Mg(2+) site is built by D274, E277, D307, E333, and R334. A helix-hairpin-helix (2HhH); involved in DNA recognition and bending region spans residues 471–545 (VREVFARQLM…LSRTLYQLYC (75 aa)).

The protein belongs to the XPF family. As to quaternary structure, part of the heterodimeric DNA structure-specific endonuclease complex MUS81-EME1. Part of the heterodimeric DNA structure-specific endonuclease complex MUS81-EME2. Interacts with BLM; may stimulate the endonuclease activity of MUS81. Interacts with SLX4/BTBD12; this interaction is direct and links the MUS81-EME1 complex to SLX4, which may coordinate the action of the structure-specific endonuclease during DNA repair. Interacts with DCLRE1B/Apollo. Interacts with RECQL5; this interaction stimulates mitotic DNA synthesis. Interacts with CHEK2. It depends on Mg(2+) as a cofactor. Expressed highly in testis. Expressed also in bone marrow, brain, thymus and to a lesser extent in heart and skeletal muscle, colon, kidney and spleen.

The protein localises to the nucleus. It is found in the nucleolus. Functionally, catalytic subunit of two functionally distinct, structure-specific, heterodimeric DNA endonucleases MUS81-EME1 and MUS81-EME2 that are involved in the maintenance of genome stability. Both endonucleases have essentially the same substrate specificity though MUS81-EME2 is more active than its MUS81-EME1 counterpart. Both cleave 3'-flaps and nicked Holliday junctions, and exhibit limited endonuclease activity with 5' flaps and nicked double-stranded DNAs. MUS81-EME2 which is active during the replication of DNA is more specifically involved in replication fork processing. Replication forks frequently encounter obstacles to their passage, including DNA base lesions, DNA interstrand cross-links, difficult-to-replicate sequences, transcription bubbles, or tightly bound proteins. One mechanism for the restart of a stalled replication fork involves nucleolytic cleavage mediated by the MUS81-EME2 endonuclease. By acting upon the stalled fork, MUS81-EME2 generates a DNA double-strand break (DSB) that can be repaired by homologous recombination, leading to the restoration of an active fork. MUS81-EME2 could also function in telomere maintenance. MUS81-EME1, on the other hand, is active later in the cell cycle and functions in the resolution of mitotic recombination intermediates including the Holliday junctions, the four-way DNA intermediates that form during homologous recombination. The polypeptide is Structure-specific endonuclease subunit MUS81 (Mus musculus (Mouse)).